We begin with the raw amino-acid sequence, 240 residues long: UDP-2,3-diacylglucosamine hydrolase (240 aa).

Residues Asp-8, His-10, Asp-41, Asn-79, and His-114 each coordinate Mn(2+). 79–80 contacts substrate; sequence NR. Positions 122, 160, 164, 167, and 195 each coordinate substrate. Positions 195 and 197 each coordinate Mn(2+).

The protein belongs to the LpxH family. Mn(2+) is required as a cofactor.

The protein resides in the cell inner membrane. It carries out the reaction UDP-2-N,3-O-bis[(3R)-3-hydroxytetradecanoyl]-alpha-D-glucosamine + H2O = 2-N,3-O-bis[(3R)-3-hydroxytetradecanoyl]-alpha-D-glucosaminyl 1-phosphate + UMP + 2 H(+). Its pathway is glycolipid biosynthesis; lipid IV(A) biosynthesis; lipid IV(A) from (3R)-3-hydroxytetradecanoyl-[acyl-carrier-protein] and UDP-N-acetyl-alpha-D-glucosamine: step 4/6. Hydrolyzes the pyrophosphate bond of UDP-2,3-diacylglucosamine to yield 2,3-diacylglucosamine 1-phosphate (lipid X) and UMP by catalyzing the attack of water at the alpha-P atom. Involved in the biosynthesis of lipid A, a phosphorylated glycolipid that anchors the lipopolysaccharide to the outer membrane of the cell. The sequence is that of UDP-2,3-diacylglucosamine hydrolase from Escherichia coli (strain UTI89 / UPEC).